Consider the following 95-residue polypeptide: UPF0132 membrane protein AF_0736 (95 aa).

3 helical membrane passes run 2–22 (CYTL…SPFV), 32–52 (TFST…GALL), and 55–75 (VVMA…SRGE).

This sequence belongs to the UPF0132 family.

It is found in the cell membrane. This Archaeoglobus fulgidus (strain ATCC 49558 / DSM 4304 / JCM 9628 / NBRC 100126 / VC-16) protein is UPF0132 membrane protein AF_0736.